A 140-amino-acid chain; its full sequence is Protein YwqH (140 aa).

Positions Met-6–Lys-51 form a coiled coil.

The chain is Protein YwqH (ywqH) from Bacillus subtilis (strain 168).